Reading from the N-terminus, the 515-residue chain is Cytochrome P450 monooxygenase mfmA (515 aa).

A helical transmembrane segment spans residues 3 to 23; sequence KISIIPIVGVALSLAIILQLG. C453 contributes to the heme binding site.

The protein belongs to the cytochrome P450 family. Heme is required as a cofactor.

It is found in the membrane. Its pathway is secondary metabolite biosynthesis; terpenoid biosynthesis. Cytochrome P450 monooxygenase; part of the gene cluster that mediates the biosynthesis of the phthalide-terpenoid hybrid 11'-O-desmethylfendlerol. Within the pathway, mfma and mfmC act together to convert 3,5-dimethylorsellinic acid (DMOA) into the phthalide 5,7-dihydroxy-4-(hydroxymethyl)-6-methylphthalide. MfmA performs especially an hydroxylation at C-9. The biosynthesis of 11'-O-desmethylfendlerol begins with the NR-PKS mfmB that forms 3,5-dimethylorsellinic acid (DMOA), which is then transformed into the phthalide 5,7-dihydroxy-4-(hydroxymethyl)-6-methylphthalide by the cytochrome P450 monooxygenase mfmA and the hydrolase mfmC. Subsequently, the methyltransferase mfmE catalyzes 7-O-methylation to yield 5-hydroxy-4-(hydroxymethyl)-7-methoxy-6-methylphthalide, which undergoes C-3 hydroxylation by the cytochrome P450 monooxygenase mfmF. The resultant cyclopolic acid (2,5-dihydroxy-4-(hydroxymethyl)-7-methoxy-6-methylphthalide) is then farnesylated by the DMATS-type prenyltransferase mfmD to afford 5-O-farnesylcyclopolic acid. Finally, the Pyr4-family terpene cyclase mfmH cyclizes the farnesyl moiety of 5-O-farnesylcyclopolic acid into a drimane-like structure, thus completing the biosynthesis of 11'-O-desmethylfendlerol. This Annulohypoxylon moriforme (Filamentous fungus) protein is Cytochrome P450 monooxygenase mfmA.